A 928-amino-acid polypeptide reads, in one-letter code: Protein ARABIDILLO 2 (928 aa).

The short motif at 3-8 is the Nuclear localization signal element; it reads RRVRQR. The F-box domain maps to 37-83; that stretch reads YVNWTSLPYDTVFHLFTRLNYRDRASLASTCRTWRSLGASSFLWSSL. ARM repeat units follow at residues 147–186, 237–278, 303–341, 370–409, 419–458, 460–499, 501–543, 545–585, 591–630, 632–674, 676–715, 717–757, and 824–864; these read AARH…KLRV, TSNI…KSSQ, KGKV…DLIR, SQGL…TFIV, CGRA…NLSV, AKVA…NLSV, EEHK…NLAA, DKCS…NLAA, GNNA…NLAF, DKNR…GLSV, EANS…NLSF, PGNA…YMFD, and IPEA…QFTI.

Belongs to the beta-catenin family. Expressed ubiquitously.

The protein resides in the nucleus. In terms of biological role, promotes lateral root initiation and development, independently of auxin (IAA) and abscisis acid (ABA). This chain is Protein ARABIDILLO 2, found in Arabidopsis thaliana (Mouse-ear cress).